The primary structure comprises 313 residues: Protein FixB (313 aa).

Residue 255–283 (LYLAVGISGQIQHMVGANASQTIFAINKD) participates in FAD binding.

Belongs to the ETF alpha-subunit/FixB family. In terms of assembly, heterodimer of FixA and FixB.

Its pathway is amine and polyamine metabolism; carnitine metabolism. Functionally, required for anaerobic carnitine reduction. May bring reductant to CaiA. This chain is Protein FixB, found in Escherichia coli O139:H28 (strain E24377A / ETEC).